Here is a 308-residue protein sequence, read N- to C-terminus: Aspartate carbamoyltransferase catalytic subunit (308 aa).

Carbamoyl phosphate-binding residues include Arg-57 and Thr-58. L-aspartate is bound at residue Lys-86. Carbamoyl phosphate-binding residues include Arg-107, His-135, and Gln-138. The L-aspartate site is built by Arg-168 and Arg-229. Leu-268 and Pro-269 together coordinate carbamoyl phosphate.

This sequence belongs to the aspartate/ornithine carbamoyltransferase superfamily. ATCase family. In terms of assembly, heterooligomer of catalytic and regulatory chains.

The enzyme catalyses carbamoyl phosphate + L-aspartate = N-carbamoyl-L-aspartate + phosphate + H(+). The protein operates within pyrimidine metabolism; UMP biosynthesis via de novo pathway; (S)-dihydroorotate from bicarbonate: step 2/3. Catalyzes the condensation of carbamoyl phosphate and aspartate to form carbamoyl aspartate and inorganic phosphate, the committed step in the de novo pyrimidine nucleotide biosynthesis pathway. In Thermococcus gammatolerans (strain DSM 15229 / JCM 11827 / EJ3), this protein is Aspartate carbamoyltransferase catalytic subunit.